The primary structure comprises 203 residues: NADH-ubiquinone oxidoreductase chain 6 (203 aa).

Helical transmembrane passes span 16–36, 40–60, 70–90, 102–122, and 179–199; these read SNIL…TIVS, VVSV…LIMI, LLVY…LINI, YIPL…QKII, and WLII…VISI.

The protein belongs to the complex I subunit 6 family.

It is found in the mitochondrion membrane. The enzyme catalyses a ubiquinone + NADH + 5 H(+)(in) = a ubiquinol + NAD(+) + 4 H(+)(out). In terms of biological role, core subunit of the mitochondrial membrane respiratory chain NADH dehydrogenase (Complex I) that is believed to belong to the minimal assembly required for catalysis. Complex I functions in the transfer of electrons from NADH to the respiratory chain. The immediate electron acceptor for the enzyme is believed to be ubiquinone. The chain is NADH-ubiquinone oxidoreductase chain 6 (ND6) from Trichophyton rubrum (Athlete's foot fungus).